The primary structure comprises 434 residues: Chaperone SurA (434 aa).

The first 22 residues, 1–22 (MKHSKKIVTALLALAMSQTVMA), serve as a signal peptide directing secretion. 2 PpiC domains span residues 173-274 (EVEF…KVMD) and 283-383 (VEEV…QLMD).

The protein resides in the periplasm. It catalyses the reaction [protein]-peptidylproline (omega=180) = [protein]-peptidylproline (omega=0). Functionally, chaperone involved in the correct folding and assembly of outer membrane proteins. Recognizes specific patterns of aromatic residues and the orientation of their side chains, which are found more frequently in integral outer membrane proteins. May act in both early periplasmic and late outer membrane-associated steps of protein maturation. In Shewanella denitrificans (strain OS217 / ATCC BAA-1090 / DSM 15013), this protein is Chaperone SurA.